A 308-amino-acid polypeptide reads, in one-letter code: Uricase-2 (308 aa).

Active-site charge relay system residues include Lys17 and Thr63. Urate contacts are provided by Thr63, Asp64, Phe165, Arg182, Val237, Gln238, and Asn264. His266 functions as the Charge relay system in the catalytic mechanism. Residues 306–308 (SKL) carry the Microbody targeting signal motif.

It belongs to the uricase family. Homotetramer. In terms of tissue distribution, expressed predominantly in the uninfected cells of the central tissue of the root nodule. Also expressed in the nodule parenchyma cells and vascular tissue, in the roots, stems and leaves of uninfected adult plants, and in the cotyledons, roots and hypocotyls of developing seedlings. Localized to the metaxylem parenchyma cells and phloem fibers of developing roots.

It is found in the peroxisome. The catalysed reaction is urate + O2 + H2O = 5-hydroxyisourate + H2O2. It functions in the pathway purine metabolism; urate degradation; (S)-allantoin from urate: step 1/3. Catalyzes the oxidation of uric acid to 5-hydroxyisourate, which is further processed to form (S)-allantoin. The chain is Uricase-2 (URIII) from Phaseolus vulgaris (Kidney bean).